Here is a 226-residue protein sequence, read N- to C-terminus: 2-C-methyl-D-erythritol 4-phosphate cytidylyltransferase (226 aa).

It belongs to the IspD/TarI cytidylyltransferase family. IspD subfamily.

It catalyses the reaction 2-C-methyl-D-erythritol 4-phosphate + CTP + H(+) = 4-CDP-2-C-methyl-D-erythritol + diphosphate. Its pathway is isoprenoid biosynthesis; isopentenyl diphosphate biosynthesis via DXP pathway; isopentenyl diphosphate from 1-deoxy-D-xylulose 5-phosphate: step 2/6. Catalyzes the formation of 4-diphosphocytidyl-2-C-methyl-D-erythritol from CTP and 2-C-methyl-D-erythritol 4-phosphate (MEP). The protein is 2-C-methyl-D-erythritol 4-phosphate cytidylyltransferase of Trichodesmium erythraeum (strain IMS101).